A 103-amino-acid polypeptide reads, in one-letter code: MYAVFQSGGKQHRVAEGHTVRLEKLEVATGDTVEFDQVLLVADGETVHVGAPLVAGGKVVAEVVSHGRAEKVTIVKFRRRKHHDKKMGHRQWFTEVKITAINA.

This sequence belongs to the bacterial ribosomal protein bL21 family. In terms of assembly, part of the 50S ribosomal subunit. Contacts protein L20.

In terms of biological role, this protein binds to 23S rRNA in the presence of protein L20. The sequence is that of Large ribosomal subunit protein bL21 from Shewanella sediminis (strain HAW-EB3).